The chain runs to 219 residues: Exosomal polycystin-1-interacting protein (219 aa).

Positions 1 to 19 (MAPPSRHCLLLISTLGVFA) are cleaved as a signal peptide. N-linked (GlcNAc...) asparagine glycosylation is found at asparagine 29, asparagine 42, asparagine 95, asparagine 188, and asparagine 210.

Belongs to the EPCIP family. In terms of assembly, homooligomer. Interacts with PKD1 (via the PKD repeats in the N-terminal extracellular region); the interaction is not dependent on N-glycosylation of either protein. N-glycosylated. In terms of tissue distribution, detected in the kidney and in the endothelium of large blood vessels (at protein level).

It localises to the vesicle. It is found in the secreted. Its subcellular location is the extracellular exosome. Likely to be involved with PKD1 in the detection, sequestration and exocytosis of senescent mitochondria. The polypeptide is Exosomal polycystin-1-interacting protein (Homo sapiens (Human)).